The primary structure comprises 216 residues: MSLGLVGRKVGMTRIFTDDGDSIPVTVVEVGDNRVTQIKTDETDGYTAVQVTFGARRASRVTKPLAGHLAKAGVEAGEIIREFRIDAAKAAELQTGGSLSVDLFEVGQKIDVQGVTIGKGYAGTIKRYHFASGRATHGNSRSHNVPGSIGMAQDPGRVFPGKRMTGHLGDVTRTVQNLEIAKIDAERKLLLVKGAIPGSKNGKVIVTPAVKAKAKA.

The segment at 134–153 (RATHGNSRSHNVPGSIGMAQ) is disordered. Position 153 is an N5-methylglutamine (Gln-153).

This sequence belongs to the universal ribosomal protein uL3 family. As to quaternary structure, part of the 50S ribosomal subunit. Forms a cluster with proteins L14 and L19. Post-translationally, methylated by PrmB.

Its function is as follows. One of the primary rRNA binding proteins, it binds directly near the 3'-end of the 23S rRNA, where it nucleates assembly of the 50S subunit. The polypeptide is Large ribosomal subunit protein uL3 (Cupriavidus pinatubonensis (strain JMP 134 / LMG 1197) (Cupriavidus necator (strain JMP 134))).